The chain runs to 129 residues: Mini-ribonuclease 3-like protein (129 aa).

Asp23 is a catalytic residue.

It belongs to the MrnC RNase family.

Functionally, might be a ribonuclease involved in RNA processing. The sequence is that of Mini-ribonuclease 3-like protein (mrnCL) from Fusobacterium nucleatum subsp. nucleatum (strain ATCC 25586 / DSM 15643 / BCRC 10681 / CIP 101130 / JCM 8532 / KCTC 2640 / LMG 13131 / VPI 4355).